The primary structure comprises 132 residues: uncharacterized protein (132 aa).

Residues 107-132 are disordered; the sequence is LNTFSGSGQKHSQPGSGQHPFSFRKD. The segment covering 108-122 has biased composition (polar residues); sequence NTFSGSGQKHSQPGS.

This is an uncharacterized protein from Bacillus subtilis (strain 168).